Consider the following 331-residue polypeptide: MGSVSKANVPKIDVSPLFGDDQAAKMRVAQQIDAASRDTGFFYAVNHGINVQRLSQKTKEFHMSITPEEKWDLAIRAYNKEHQDQVRAGYYLSIPGKKAVESFCYLNPNFTPDHPRIQAKTPTHEVNVWPDETKHPGFQDFAEQYYWDVFGLSSALLKGYALALGKEENFFARHFKPDDTLASVVLIRYPYLDPYPEAAIKTAADGTKLSFEWHEDVSLITVLYQSNVQNLQVETAAGYQDIEADDTGYLINCGSYMAHLTNNYYKAPIHRVKWVNAERQSLPFFVNLGYDSVIDPFDPREPNGKSDREPLSYGDYLQNGLVSLINKNGQT.

Isopenicillin N-binding residues include Arg-87, Tyr-91, Ser-183, and Tyr-189. 6 residues coordinate N-[(5S)-5-amino-5-carboxypentanoyl]-L-cysteinyl-D-valine: Arg-87, Tyr-91, Ser-183, Tyr-189, His-214, and Asp-216. Residues 176–288 enclose the Fe2OG dioxygenase domain; the sequence is KPDDTLASVV…RQSLPFFVNL (113 aa). His-214, Asp-216, and His-270 together coordinate Fe(2+). Residue Arg-279 participates in 2-oxoglutarate binding. Ser-281 is a binding site for isopenicillin N. Ser-281 is a binding site for N-[(5S)-5-amino-5-carboxypentanoyl]-L-cysteinyl-D-valine.

This sequence belongs to the iron/ascorbate-dependent oxidoreductase family. Monomer. Fe(2+) is required as a cofactor.

The protein resides in the cytoplasm. The protein localises to the cytosol. The catalysed reaction is N-[(5S)-5-amino-5-carboxypentanoyl]-L-cysteinyl-D-valine + O2 = isopenicillin N + 2 H2O. It participates in antibiotic biosynthesis; penicillin G biosynthesis; penicillin G from L-alpha-aminoadipate and L-cysteine and L-valine: step 2/3. In terms of biological role, isopenicillin N synthase; part of the gene cluster that mediates the biosynthesis of penicillin, the world's most important antibiotic. IpnA catalyzes the cyclization of the tripeptide N-[(5S)-5-amino-5-carboxypentanoyl]-L-cysteinyl-D-valine (LLD-ACV or ACV) to form isopenicillin N (IPN) that contains the beta-lactam nucleus. The penicillin biosynthesis occurs via 3 enzymatic steps, the first corresponding to the production of the tripeptide N-[(5S)-5-amino-5-carboxypentanoyl]-L-cysteinyl-D-valine (LLD-ACV or ACV) by the NRPS acvA. The tripeptide ACV is then cyclized to isopenicillin N (IPN) by the isopenicillin N synthase ipnA that forms the beta-lactam nucleus. Finally, the alpha-aminoadipyl side chain is exchanged for phenylacetic acid by the isopenicillin N acyltransferase penDE to yield penicillin in the peroxisomal matrix. The chain is Isopenicillin N synthase from Emericella nidulans (strain FGSC A4 / ATCC 38163 / CBS 112.46 / NRRL 194 / M139) (Aspergillus nidulans).